The sequence spans 367 residues: Putative F-box protein At3g21130 (367 aa).

The F-box domain maps to 4 to 50; it reads KRNTVYLSEDLIVEILSRVSAVSLARLRTTSKRWNALVKDERLAKKH.

The chain is Putative F-box protein At3g21130 from Arabidopsis thaliana (Mouse-ear cress).